The primary structure comprises 308 residues: Thiohydrolase (308 aa).

The protein belongs to the polyketide transferase af380 family.

The protein operates within mycotoxin biosynthesis. Thiohydrolase; part of the gene cluster that mediates the biosynthesis of brefeldin A (BFA), a protein transport inhibitor that shows antiviral, antifungal, and antitumor properties. The proposed biosynthesis of BFA involves formation of an acyclic polyketide chain that is differentially tailored throughout the backbone. The highly reducing polyketide synthase Bref-PKS is proposed to synthesize the precisely reduced octaketide precursor, which could then be directly offloaded by the thiohydrolase enzyme Bref-TH followed by a cytochrome P450 monooxygenase-mediated formation of the cyclopentane ring and macrocyclization to afford 7-deoxy BFA. Alternatively, the first ring annulation can also occur on the ACP-tethered intermediate before the thiohydrolase release and lactonization. The C7-hydroxylation by another cytochrome P450 monooxygenase is believed to be the final step in the process to obtain the final structure of BFA. In addition to the HRPKS Bref-PKS and the thiohydrolase Bref-TH, the brefeldin A biosynthesis cluster contains 4 cytochrome p450 monooxygenases (called orf3 to orf6), as well a the probable cluster-specific transcription regulator orf8. This is Thiohydrolase from Eupenicillium brefeldianum (Penicillium brefeldianum).